The chain runs to 398 residues: Acetate kinase 1 (398 aa).

Asparagine 9 is a binding site for Mg(2+). Residue lysine 16 coordinates ATP. Arginine 89 provides a ligand contact to substrate. The active-site Proton donor/acceptor is the aspartate 146. ATP-binding positions include 206 to 210 (HLGNG), 281 to 283 (DCR), and 329 to 333 (GIGEN). Glutamate 384 serves as a coordination point for Mg(2+).

It belongs to the acetokinase family. Homodimer. It depends on Mg(2+) as a cofactor. Mn(2+) serves as cofactor.

The protein resides in the cytoplasm. The catalysed reaction is acetate + ATP = acetyl phosphate + ADP. It functions in the pathway metabolic intermediate biosynthesis; acetyl-CoA biosynthesis; acetyl-CoA from acetate: step 1/2. Functionally, catalyzes the formation of acetyl phosphate from acetate and ATP. Can also catalyze the reverse reaction. The chain is Acetate kinase 1 from Vibrio vulnificus (strain CMCP6).